The following is a 314-amino-acid chain: Replication initiation protein (314 aa).

Over residues 1-18 (MSKKAEEIQAKQSLEKEN) the composition is skewed to basic and acidic residues. Residues 1-25 (MSKKAEEIQAKQSLEKENSNFSKTG) are disordered.

This sequence belongs to the plasmid replication initiation factor family.

This protein is probably a specific topoisomerase involved in initiating replication. This protein is specifically required and may be rate-limiting for replication of the plasmid in vivo. In Staphylococcus aureus, this protein is Replication initiation protein (repE).